The following is a 121-amino-acid chain: Large ribosomal subunit protein bL12 (121 aa).

It belongs to the bacterial ribosomal protein bL12 family. As to quaternary structure, homodimer. Part of the ribosomal stalk of the 50S ribosomal subunit. Forms a multimeric L10(L12)X complex, where L10 forms an elongated spine to which 2 to 4 L12 dimers bind in a sequential fashion. Binds GTP-bound translation factors.

Functionally, forms part of the ribosomal stalk which helps the ribosome interact with GTP-bound translation factors. Is thus essential for accurate translation. The protein is Large ribosomal subunit protein bL12 of Vibrio cholerae serotype O1 (strain ATCC 39541 / Classical Ogawa 395 / O395).